The following is a 220-amino-acid chain: Glycerol-3-phosphate acyltransferase (220 aa).

5 helical membrane passes run 4 to 24 (LTILMIILAYLGGSLSSAVLV), 53 to 73 (VAALVVLLLDVLKGTAPVYLA), 80 to 100 (PVYLGFIGVAACLGHMYPIFF), 116 to 136 (MPIGFTMGGAVIGTWLVVLLV), and 138 to 158 (GYSSLASIITVLLSPLFTYLI). The tract at residues 193-220 (WGRQAQRRQEEVGEMDDVAQKRDERDKK) is disordered. Positions 210–220 (VAQKRDERDKK) are enriched in basic and acidic residues.

This sequence belongs to the PlsY family. As to quaternary structure, probably interacts with PlsX.

It localises to the cell inner membrane. The catalysed reaction is an acyl phosphate + sn-glycerol 3-phosphate = a 1-acyl-sn-glycero-3-phosphate + phosphate. The protein operates within lipid metabolism; phospholipid metabolism. Functionally, catalyzes the transfer of an acyl group from acyl-phosphate (acyl-PO(4)) to glycerol-3-phosphate (G3P) to form lysophosphatidic acid (LPA). This enzyme utilizes acyl-phosphate as fatty acyl donor, but not acyl-CoA or acyl-ACP. This Aeromonas salmonicida (strain A449) protein is Glycerol-3-phosphate acyltransferase.